Here is a 655-residue protein sequence, read N- to C-terminus: SRSF protein kinase 1 (655 aa).

Residues 1–57 (MERKVLALQARKKRTKAKKDKAQRKPETQHRGSAPHSESDLPEQEEEILGSDDDEQE) are disordered. Residues 10-22 (ARKKRTKAKKDKA) are compositionally biased toward basic residues. Positions 40–57 (DLPEQEEEILGSDDDEQE) are enriched in acidic residues. Position 51 is a phosphoserine; by CK2 (S51). The 574-residue stretch at 80 to 653 (YHVIRKLGWG…AAECLRHPWL (574 aa)) folds into the Protein kinase domain. Residues 86-94 (LGWGHFSTV) and K109 contribute to the ATP site. The Proton acceptor role is filled by D213. Disordered regions lie at residues 238-341 (WQRS…QDQT) and 397-417 (FLSSQNGDSSTSQETDSCTPI). Residues 265-276 (KNKKKKLKKKQK) are compositionally biased toward basic residues. 2 stretches are compositionally biased toward basic and acidic residues: residues 277 to 288 (RQAELLEKRMQE) and 304 to 318 (NKQEESESPVERPLK). Phosphoserine is present on residues S309, S311, and S333. S555 carries the post-translational modification Phosphoserine; by CK2.

Belongs to the protein kinase superfamily. CMGC Ser/Thr protein kinase family. Monomer. Found in a multisubunit complex containing seven proteins, named toposome, which separates entangled circular chromatin DNA during chromosome segregation. Interacts with HHV-1 ICP27 protein. Interacts with DNAJC8 and AHSA1/AHA1 and this mediates formation of a complex with the Hsp70 /Hsp90 machinery. Binds to IGF2BP1, SYNCRIP, HNRNPA2B1 and HNRNPC. Interacts with SAFB/SAFB1 and SAFB2 which inhibits its activity. Requires Mg(2+) as cofactor.

The protein resides in the cytoplasm. It localises to the nucleus. Its subcellular location is the nucleoplasm. It is found in the nucleus matrix. The protein localises to the microsome. The protein resides in the nucleus speckle. It localises to the chromosome. It catalyses the reaction L-seryl-[protein] + ATP = O-phospho-L-seryl-[protein] + ADP + H(+). It carries out the reaction L-threonyl-[protein] + ATP = O-phospho-L-threonyl-[protein] + ADP + H(+). Activated by phosphorylation on Ser-51 and Ser-555. Serine/arginine-rich protein-specific kinase which specifically phosphorylates its substrates at serine residues located in regions rich in arginine/serine dipeptides, known as RS domains and is involved in the phosphorylation of SR splicing factors and the regulation of splicing. Plays a central role in the regulatory network for splicing, controlling the intranuclear distribution of splicing factors in interphase cells and the reorganization of nuclear speckles during mitosis. Can influence additional steps of mRNA maturation, as well as other cellular activities, such as chromatin reorganization in somatic and sperm cells and cell cycle progression. Phosphorylates SFRS2, ZRSR2, LBR and PRM1. Phosphorylates SRSF1 using a directional (C-terminal to N-terminal) and a dual-track mechanism incorporating both processive phosphorylation (in which the kinase stays attached to the substrate after each round of phosphorylation) and distributive phosphorylation steps (in which the kinase and substrate dissociate after each phosphorylation event). The RS domain of SRSF1 binds first to a docking groove in the large lobe of the kinase domain of SRPK1. This induces certain structural changes in SRPK1 and/or RRM2 domain of SRSF1, allowing RRM2 to bind the kinase and initiate phosphorylation. The cycles continue for several phosphorylation steps in a processive manner (steps 1-8) until the last few phosphorylation steps (approximately steps 9-12). During that time, a mechanical stress induces the unfolding of the beta-4 motif in RRM2, which then docks at the docking groove of SRPK1. This also signals RRM2 to begin to dissociate, which facilitates SRSF1 dissociation after phosphorylation is completed. Can mediate hepatitis B virus (HBV) core protein phosphorylation. It plays a negative role in the regulation of HBV replication through a mechanism not involving the phosphorylation of the core protein but by reducing the packaging efficiency of the pregenomic RNA (pgRNA) without affecting the formation of the viral core particles. Can induce splicing of exon 10 in MAPT/TAU. In Pongo abelii (Sumatran orangutan), this protein is SRSF protein kinase 1.